The chain runs to 283 residues: tRNA-cytidine(32) 2-sulfurtransferase (283 aa).

A PP-loop motif motif is present at residues 37–42 (SGGKDS). The [4Fe-4S] cluster site is built by cysteine 112, cysteine 115, and cysteine 203.

It belongs to the TtcA family. In terms of assembly, homodimer. It depends on Mg(2+) as a cofactor. [4Fe-4S] cluster is required as a cofactor.

The protein resides in the cytoplasm. The enzyme catalyses cytidine(32) in tRNA + S-sulfanyl-L-cysteinyl-[cysteine desulfurase] + AH2 + ATP = 2-thiocytidine(32) in tRNA + L-cysteinyl-[cysteine desulfurase] + A + AMP + diphosphate + H(+). It participates in tRNA modification. Catalyzes the ATP-dependent 2-thiolation of cytidine in position 32 of tRNA, to form 2-thiocytidine (s(2)C32). The sulfur atoms are provided by the cysteine/cysteine desulfurase (IscS) system. The sequence is that of tRNA-cytidine(32) 2-sulfurtransferase from Legionella pneumophila (strain Corby).